A 624-amino-acid polypeptide reads, in one-letter code: Ceramide transfer protein (624 aa).

The segment covering 1 to 11 has biased composition (polar residues); sequence MSDNQSWNSSG. Residues 1 to 24 form a disordered region; that stretch reads MSDNQSWNSSGSEEDPETESGPPV. The 95-residue stretch at 23 to 117 folds into the PH domain; sequence PVERCGVLSK…WIDAIEQHKT (95 aa). Ser-126 carries the phosphoserine modification. Position 132 is a phosphoserine; by PKD (Ser-132). Ser-135 is subject to Phosphoserine. Residues 263 to 303 adopt a coiled-coil conformation; it reads IELMVKREDSWQKRLDKETEKKRRTEEAYKNAMTELKKKSH. Residue Ser-315 is modified to Phosphoserine. The FFAT motif lies at 321-327; sequence EFFDAVE. Phosphotyrosine is present on Tyr-372. Ser-373, Ser-377, and Ser-380 each carry phosphoserine. An START domain is found at 389-618; the sequence is DVHRFSSQVE…FTSYVQEKTA (230 aa). The an N-acylsphing-4-enine site is built by Glu-472, Gln-493, Asn-530, and Tyr-579.

In terms of assembly, interacts with VAPA and VAPB. Interaction with VAPB is less efficient than with VAPA. Interacts (via FFAT motif) with the MOSPD2 (via MSP domain). Phosphorylation on Ser-132 decreases the affinity toward phosphatidylinositol 4-phosphate at Golgi membranes and reduces ceramide transfer activity. Inactivated by hyperphosphorylation of serine residues by CSNK1G2/CK1 that triggers dissociation from the Golgi complex, thus down-regulating ER-to-Golgi transport of ceramide and sphingomyelin synthesis.

It localises to the cytoplasm. The protein resides in the golgi apparatus. The protein localises to the endoplasmic reticulum. It catalyses the reaction N-hexadecanoylsphing-4-enine(in) = N-hexadecanoylsphing-4-enine(out). Functionally, shelters ceramides and diacylglycerol lipids inside its START domain and mediates the intracellular trafficking of ceramides and diacylglycerol lipids in a non-vesicular manner. This Pongo abelii (Sumatran orangutan) protein is Ceramide transfer protein (CERT1).